The chain runs to 116 residues: uncharacterized protein (116 aa).

Transmembrane regions (helical) follow at residues 24–44 and 70–90; these read VPFAAAGGYPISFLFIKVLTA and VILTHFLVPIFFFLFQYIILS.

It is found in the membrane. This is an uncharacterized protein from Saccharomyces cerevisiae (strain ATCC 204508 / S288c) (Baker's yeast).